We begin with the raw amino-acid sequence, 192 residues long: Fe/S biogenesis protein NfuA (192 aa).

The [4Fe-4S] cluster site is built by cysteine 149 and cysteine 152.

It belongs to the NfuA family. In terms of assembly, homodimer. [4Fe-4S] cluster is required as a cofactor.

In terms of biological role, involved in iron-sulfur cluster biogenesis. Binds a 4Fe-4S cluster, can transfer this cluster to apoproteins, and thereby intervenes in the maturation of Fe/S proteins. Could also act as a scaffold/chaperone for damaged Fe/S proteins. The sequence is that of Fe/S biogenesis protein NfuA from Colwellia psychrerythraea (strain 34H / ATCC BAA-681) (Vibrio psychroerythus).